We begin with the raw amino-acid sequence, 236 residues long: Endonuclease V (236 aa).

Positions 47 and 115 each coordinate Mg(2+).

It belongs to the endonuclease V family. The cofactor is Mg(2+).

It localises to the cytoplasm. It carries out the reaction Endonucleolytic cleavage at apurinic or apyrimidinic sites to products with a 5'-phosphate.. Functionally, DNA repair enzyme involved in the repair of deaminated bases. Selectively cleaves double-stranded DNA at the second phosphodiester bond 3' to a deoxyinosine leaving behind the intact lesion on the nicked DNA. The sequence is that of Endonuclease V from Xanthomonas campestris pv. campestris (strain 8004).